The sequence spans 221 residues: H-2 class II histocompatibility antigen, A-Q alpha chain (221 aa).

Positions G1 to N76 are alpha-1. Residues G1 to E183 lie on the Extracellular side of the membrane. The segment at E77–W170 is alpha-2. Residues P79–E171 enclose the Ig-like C1-type domain. A disulfide bond links C99 and C155. Residue N110 is glycosylated (N-linked (GlcNAc...) asparagine). The tract at residues E171–E183 is connecting peptide. A helical transmembrane segment spans residues T184–L209. The Cytoplasmic portion of the chain corresponds to R210 to L221.

The protein belongs to the MHC class II family.

The protein localises to the membrane. In Mus musculus (Mouse), this protein is H-2 class II histocompatibility antigen, A-Q alpha chain (H2-Aa).